A 288-amino-acid chain; its full sequence is Cyclin-dependent kinase 2 homolog (288 aa).

Residues 4-284 enclose the Protein kinase domain; sequence YHGLEKIGEG…AKEALQHAYF (281 aa). ATP is bound by residues 10 to 18 and lysine 32; that span reads IGEGTYGVV. The residue at position 14 (threonine 14) is a Phosphothreonine. Tyrosine 15 carries the post-translational modification Phosphotyrosine. Aspartate 125 acts as the Proton acceptor in catalysis. Threonine 158 is subject to Phosphothreonine.

It belongs to the protein kinase superfamily. CMGC Ser/Thr protein kinase family. CDC2/CDKX subfamily. In terms of assembly, may form a complex composed of at least the catalytic subunit CRK2 and a cyclin. Mg(2+) is required as a cofactor.

It is found in the cytoplasm. The catalysed reaction is L-seryl-[protein] + ATP = O-phospho-L-seryl-[protein] + ADP + H(+). It catalyses the reaction L-threonyl-[protein] + ATP = O-phospho-L-threonyl-[protein] + ADP + H(+). The enzyme catalyses [DNA-directed RNA polymerase] + ATP = phospho-[DNA-directed RNA polymerase] + ADP + H(+). Phosphorylation at Thr-14 or Tyr-15 inactivates the enzyme, while phosphorylation at Thr-158 activates it. Serine/threonine-protein kinase. Involved in the control of the cell cycle. Required for entry into S-phase and mitosis. Probable component of the kinase complex that phosphorylates the repetitive C-terminus of RNA polymerase II. This is Cyclin-dependent kinase 2 homolog from Plasmodium knowlesi (strain H).